We begin with the raw amino-acid sequence, 131 residues long: Profilin-5 (131 aa).

Cys-13 and Cys-115 form a disulfide bridge. The Involved in PIP2 interaction motif lies at 81–97 (AVIRGKKGAGGITVKKT). Thr-111 is modified (phosphothreonine).

Belongs to the profilin family. As to quaternary structure, occurs in many kinds of cells as a complex with monomeric actin in a 1:1 ratio. Phosphorylated by MAP kinases.

The protein resides in the cytoplasm. It localises to the cytoskeleton. Binds to actin and affects the structure of the cytoskeleton. At high concentrations, profilin prevents the polymerization of actin, whereas it enhances it at low concentrations. In Corylus avellana (European hazel), this protein is Profilin-5.